Reading from the N-terminus, the 396-residue chain is Pre-mRNA-splicing regulator WTAP (396 aa).

At Met1 the chain carries N-acetylmethionine. Position 14 is a phosphoserine (Ser14). Low complexity-rich tracts occupy residues 240–257 (QQQQ…TTSS) and 278–291 (SNGS…SGSG). The tract at residues 240 to 396 (QQQQSQASAP…SSVNVQGAVL (157 aa)) is disordered. Ser297, Ser305, Ser306, and Ser341 each carry phosphoserine. Positions 305–316 (SSSGNGNKASNS) are enriched in low complexity. Residues 340–351 (DSPTGSENSLTH) show a composition bias toward polar residues. Thr350 carries the phosphothreonine modification. Positions 352–368 (HSNDTDSSHDPQEEKAV) are enriched in basic and acidic residues. The segment covering 380–396 (HVQNGLDSSVNVQGAVL) has biased composition (polar residues). Ser388 carries the post-translational modification Phosphoserine.

It belongs to the fl(2)d family. Component of the WMM complex, a N6-methyltransferase complex composed of a catalytic subcomplex, named MAC, and of an associated subcomplex, named MACOM. The MAC subcomplex is composed of METTL3 and METTL14. The MACOM subcomplex is composed of WTAP, ZC3H13, CBLL1/HAKAI, VIRMA, and, in some cases of RBM15 (RBM15 or RBM15B). Interacts with WT1. Also a component of a MACOM-like complex, named WTAP complex, composed of WTAP, ZC3H13, CBLL1, VIRMA, RBM15, BCLAF1 and THRAP3. Interacts with CPNE4 (via VWFA domain).

Its subcellular location is the nucleus speckle. The protein resides in the nucleus. The protein localises to the nucleoplasm. It localises to the cytoplasm. Functionally, associated component of the WMM complex, a complex that mediates N6-methyladenosine (m6A) methylation of RNAs, a modification that plays a role in the efficiency of mRNA splicing and RNA processing. Acts as a key regulator of m6A methylation by promoting m6A methylation of mRNAs at the 3'-UTR. Required for accumulation of METTL3 and METTL14 to nuclear speckle. Acts as a mRNA splicing regulator. Regulates G2/M cell-cycle transition by binding to the 3' UTR of CCNA2, which enhances its stability. Impairs WT1 DNA-binding ability and inhibits expression of WT1 target genes. This is Pre-mRNA-splicing regulator WTAP from Mus musculus (Mouse).